Consider the following 258-residue polypeptide: Cytochrome P450 1A2 (258 aa).

The protein belongs to the cytochrome P450 family. Requires heme as cofactor.

It is found in the endoplasmic reticulum membrane. Its subcellular location is the microsome membrane. The catalysed reaction is an organic molecule + reduced [NADPH--hemoprotein reductase] + O2 = an alcohol + oxidized [NADPH--hemoprotein reductase] + H2O + H(+). In terms of biological role, cytochromes P450 are a group of heme-thiolate monooxygenases. In liver microsomes, this enzyme is involved in an NADPH-dependent electron transport pathway. It oxidizes a variety of structurally unrelated compounds, including steroids, fatty acids, and xenobiotics. This Gallus gallus (Chicken) protein is Cytochrome P450 1A2 (CYP1A2).